The primary structure comprises 312 residues: Expansin-A24 (312 aa).

The N-terminal stretch at 1 to 27 is a signal peptide; that stretch reads MELLKRKLYAKILMMVMVIWIAPMTNG. The segment at 31-86 is disordered; sequence ASHVPGGRPGAHPSHGAHPAHGAHPSHGAHPSHGAHPSHGAHPSHGALPSHGGQVP. Over residues 40–77 the composition is skewed to low complexity; that stretch reads GAHPSHGAHPAHGAHPSHGAHPSHGAHPSHGAHPSHGA. A run of 6 repeats spans residues 42-47, 48-53, 54-59, 60-65, 66-71, and 72-77. The tract at residues 42–77 is 6 X 6 AA tandem repeats of H-P-S-H-G-A; sequence HPSHGAHPAHGAHPSHGAHPSHGAHPSHGAHPSHGA. The Expansin-like EG45 domain occupies 108-218; that stretch reads QGACGYGDLH…RRVPCAKIGG (111 aa). An Expansin-like CBD domain is found at 228–307; that stretch reads HFLMILPYNV…DWKCNGQSFD (80 aa).

Belongs to the expansin family. Expansin A subfamily.

It localises to the secreted. It is found in the cell wall. Its subcellular location is the membrane. In terms of biological role, causes loosening and extension of plant cell walls by disrupting non-covalent bonding between cellulose microfibrils and matrix glucans. No enzymatic activity has been found. This Arabidopsis thaliana (Mouse-ear cress) protein is Expansin-A24 (EXPA24).